Reading from the N-terminus, the 136-residue chain is Heme-binding protein Rv0203 (136 aa).

An N-terminal signal peptide occupies residues 1–27 (MKTGTATTRRRLLAVLIALALPGAAVA). Residues cysteine 41 and cysteine 115 are joined by a disulfide bond. Residues tyrosine 60, histidine 64, and histidine 90 each coordinate heme.

Dimer of dimers.

The protein resides in the secreted. Its function is as follows. Part of a heme-iron acquisition system. Acts by binding heme and delivering it to the membrane proteins MmpL3 and MmpL11. Can use free heme or heme from host hemoglobin. In Mycobacterium tuberculosis (strain ATCC 25618 / H37Rv), this protein is Heme-binding protein Rv0203.